A 198-amino-acid polypeptide reads, in one-letter code: N-acetyltransferase 9-like protein (198 aa).

The region spanning 14–186 (IILVPYKEKH…SNNFTNLTAD (173 aa)) is the N-acetyltransferase domain.

This sequence belongs to the acetyltransferase family. GNAT subfamily.

This is N-acetyltransferase 9-like protein (nat9) from Nematostella vectensis (Starlet sea anemone).